Here is a 362-residue protein sequence, read N- to C-terminus: Olfactory receptor 5AU1 (362 aa).

Residues 1-79 are Extracellular-facing; that stretch reads MTEFHLQSQM…TDPQLQRLLF (79 aa). N-linked (GlcNAc...) asparagine glycosylation occurs at Asn-56. Residues 80–100 traverse the membrane as a helical segment; it reads VVFLGMYTATLLGNLVMFLLI. At 101–116 the chain is on the cytoplasmic side; sequence HVSATLHTPMYSLLKS. The helical transmembrane segment at 117–139 threads the bilayer; that stretch reads LSFLDFCYSSTVVPQTLVNFLAK. Over 140–150 the chain is Extracellular; it reads RKVISYFGCMT. Residues Cys-148 and Cys-230 are joined by a disulfide bond. The helical transmembrane segment at 151-171 threads the bilayer; it reads QMFFYAGFATSECYLIAAMAY. Topologically, residues 172–194 are cytoplasmic; the sequence is DRYAAICNPLLYSTIMSPEVCAS. A helical transmembrane segment spans residues 195-215; that stretch reads LIVGSYSAGFLNSLIHTGCIF. The Extracellular portion of the chain corresponds to 216–247; sequence SLKFCGAHVVTHFFCDGPPILSLSCVDTSLCE. Residues 248–268 traverse the membrane as a helical segment; it reads ILLFIFAGFNLLSCTLTILIS. At 269 to 290 the chain is on the cytoplasmic side; that stretch reads YFLILNTILKMSSAQGRFKAFS. A helical membrane pass occupies residues 291 to 311; the sequence is TCASHLTAICLFFGTTLFMYL. At 312–322 the chain is on the extracellular side; that stretch reads RPRSSYSLTQD. Residues 323–343 form a helical membrane-spanning segment; that stretch reads RTVAVIYTVVIPVLNPLMYSL. At 344-362 the chain is on the cytoplasmic side; it reads RNKDVKKALIKVWGRKTME.

Belongs to the G-protein coupled receptor 1 family.

It localises to the cell membrane. Its function is as follows. Odorant receptor. The polypeptide is Olfactory receptor 5AU1 (OR5AU1) (Homo sapiens (Human)).